Reading from the N-terminus, the 331-residue chain is Protein C10 (331 aa).

The protein belongs to the poxviridae C4/C10 protein family.

This Vaccinia virus (strain Western Reserve) (VACV) protein is Protein C10.